The sequence spans 247 residues: Large ribosomal subunit protein uL24m (247 aa).

Residues 84-117 (FFRGDRIEVLVGKDKGKQGIVTQVIPERNWVIVE) form the KOW domain.

This sequence belongs to the universal ribosomal protein uL24 family. Component of the mitochondrial ribosome large subunit (39S) which comprises a 16S rRNA and about 50 distinct proteins.

It is found in the mitochondrion. The protein is Large ribosomal subunit protein uL24m (mRpL24) of Drosophila melanogaster (Fruit fly).